Reading from the N-terminus, the 267-residue chain is MKAAVLTLAVLFLTGSQARHFWQQDEPPQSPWDRVKDLATVYVDVLKDSGRDYVSQFEGSTLGKQLNLKLLDNWDSVTSTFSKLREQLGPVTQEFWDNLEKETEGLRQEMSKDLEEVKAKVQPYLDDFQKKWQEEMELYRQKVEPLRAELQEGARQKLHELQEKLSPLGEEMRDRARAHVDALRTHLAPYSDELRQRLAARLEALKENGGARLAEYHAKATEHLSTLSEKAKPALEDLRQGLLPVLESFKVSFLSALEEYTKKLNTQ.

A signal peptide spans 1-18; the sequence is MKAAVLTLAVLFLTGSQA. Tandem repeats lie at residues 68-89 and 90-111. The segment at 68–267 is 10 X approximate tandem repeats; that stretch reads LKLLDNWDSV…EEYTKKLNTQ (200 aa). Methionine sulfoxide is present on Met110. One copy of the 3; half-length repeat lies at 112 to 122; it reads KDLEEVKAKVQ. 5 tandem repeats follow at residues 123–144, 145–166, 167–188, 189–210, and 211–232. Met136 bears the Methionine sulfoxide mark. The 9; half-length repeat unit spans residues 233–243; it reads PALEDLRQGLL. Copy 10 of the repeat occupies 244 to 267; that stretch reads PVLESFKVSFLSALEEYTKKLNTQ.

Belongs to the apolipoprotein A1/A4/E family. In terms of assembly, homodimer. Interacts with APOA1BP and CLU. Component of a sperm activating protein complex (SPAP), consisting of APOA1, an immunoglobulin heavy chain, an immunoglobulin light chain and albumin. Interacts with NDRG1. Interacts with SCGB3A2. Interacts with NAXE and YJEFN3. In terms of processing, glycosylated. Palmitoylated. Post-translationally, phosphorylation sites are present in the extracellular medium. In terms of tissue distribution, major protein of plasma HDL, also found in chylomicrons.

Its subcellular location is the secreted. In terms of biological role, participates in the reverse transport of cholesterol from tissues to the liver for excretion by promoting cholesterol efflux from tissues and by acting as a cofactor for the lecithin cholesterol acyltransferase (LCAT). As part of the SPAP complex, activates spermatozoa motility. In Pan paniscus (Pygmy chimpanzee), this protein is Apolipoprotein A-I (APOA1).